Reading from the N-terminus, the 378-residue chain is Chaperone protein DnaJ (378 aa).

In terms of domain architecture, J spans 5 to 70; sequence DYYEVLGVGR…NKKAAYDQFG (66 aa). The segment at 134–212 adopts a CR-type zinc-finger fold; sequence GLTKELRIPT…CHGDGRVEKT (79 aa). The Zn(2+) site is built by cysteine 147, cysteine 150, cysteine 164, cysteine 167, cysteine 186, cysteine 189, cysteine 200, and cysteine 203. CXXCXGXG motif repeat units follow at residues 147-154, 164-171, 186-193, and 200-207; these read CDVCDGSG, CTTCHGQG, CPTCHGRG, and CAKCHGDG.

It belongs to the DnaJ family. As to quaternary structure, homodimer. The cofactor is Zn(2+).

It localises to the cytoplasm. Participates actively in the response to hyperosmotic and heat shock by preventing the aggregation of stress-denatured proteins and by disaggregating proteins, also in an autonomous, DnaK-independent fashion. Unfolded proteins bind initially to DnaJ; upon interaction with the DnaJ-bound protein, DnaK hydrolyzes its bound ATP, resulting in the formation of a stable complex. GrpE releases ADP from DnaK; ATP binding to DnaK triggers the release of the substrate protein, thus completing the reaction cycle. Several rounds of ATP-dependent interactions between DnaJ, DnaK and GrpE are required for fully efficient folding. Also involved, together with DnaK and GrpE, in the DNA replication of plasmids through activation of initiation proteins. This is Chaperone protein DnaJ from Shewanella oneidensis (strain ATCC 700550 / JCM 31522 / CIP 106686 / LMG 19005 / NCIMB 14063 / MR-1).